Here is a 411-residue protein sequence, read N- to C-terminus: Phosphopentomutase (411 aa).

Residues aspartate 14, aspartate 306, histidine 311, aspartate 347, histidine 348, and histidine 359 each contribute to the Mn(2+) site.

This sequence belongs to the phosphopentomutase family. Mn(2+) serves as cofactor.

The protein localises to the cytoplasm. It carries out the reaction 2-deoxy-alpha-D-ribose 1-phosphate = 2-deoxy-D-ribose 5-phosphate. The enzyme catalyses alpha-D-ribose 1-phosphate = D-ribose 5-phosphate. Its pathway is carbohydrate degradation; 2-deoxy-D-ribose 1-phosphate degradation; D-glyceraldehyde 3-phosphate and acetaldehyde from 2-deoxy-alpha-D-ribose 1-phosphate: step 1/2. Its function is as follows. Isomerase that catalyzes the conversion of deoxy-ribose 1-phosphate (dRib-1-P) and ribose 1-phosphate (Rib-1-P) to deoxy-ribose 5-phosphate (dRib-5-P) and ribose 5-phosphate (Rib-5-P), respectively. This is Phosphopentomutase from Lactococcus lactis subsp. lactis (strain IL1403) (Streptococcus lactis).